We begin with the raw amino-acid sequence, 152 residues long: Small ribosomal subunit protein bS16 (152 aa).

Basic and acidic residues predominate over residues 118 to 130; sequence AEKHKAKASEKKA. The disordered stretch occupies residues 118–152; it reads AEKHKAKASEKKAAAAASADEAGSAAADDAEGSES. Residues 131–144 are compositionally biased toward low complexity; sequence AAAASADEAGSAAA.

It belongs to the bacterial ribosomal protein bS16 family.

The sequence is that of Small ribosomal subunit protein bS16 from Beutenbergia cavernae (strain ATCC BAA-8 / DSM 12333 / CCUG 43141 / JCM 11478 / NBRC 16432 / NCIMB 13614 / HKI 0122).